We begin with the raw amino-acid sequence, 43 residues long: Metallothionein-2 (43 aa).

The residue at position 1 (Met1) is a Blocked amino end (Met).

This sequence belongs to the metallothionein superfamily. Type 5 family.

This protein binds cations of several transition elements. Thought to be involved in metal ion homeostasis. The sequence is that of Metallothionein-2 (MtnB) from Drosophila melanogaster (Fruit fly).